Here is an 802-residue protein sequence, read N- to C-terminus: Valine--tRNA ligase (802 aa).

A 'HIGH' region motif is present at residues Pro45–His55. Positions Lys524–Ser528 match the 'KMSKS' region motif. Lys527 contributes to the ATP binding site.

The protein belongs to the class-I aminoacyl-tRNA synthetase family. ValS type 2 subfamily. As to quaternary structure, monomer.

It is found in the cytoplasm. The catalysed reaction is tRNA(Val) + L-valine + ATP = L-valyl-tRNA(Val) + AMP + diphosphate. Its function is as follows. Catalyzes the attachment of valine to tRNA(Val). As ValRS can inadvertently accommodate and process structurally similar amino acids such as threonine, to avoid such errors, it has a 'posttransfer' editing activity that hydrolyzes mischarged Thr-tRNA(Val) in a tRNA-dependent manner. The sequence is that of Valine--tRNA ligase from Ehrlichia canis (strain Jake).